The following is a 236-amino-acid chain: 2,3,4,5-tetrahydropyridine-2,6-dicarboxylate N-acetyltransferase (236 aa).

Belongs to the transferase hexapeptide repeat family. DapH subfamily.

It carries out the reaction (S)-2,3,4,5-tetrahydrodipicolinate + acetyl-CoA + H2O = L-2-acetamido-6-oxoheptanedioate + CoA. It participates in amino-acid biosynthesis; L-lysine biosynthesis via DAP pathway; LL-2,6-diaminopimelate from (S)-tetrahydrodipicolinate (acetylase route): step 1/3. Catalyzes the transfer of an acetyl group from acetyl-CoA to tetrahydrodipicolinate. This is 2,3,4,5-tetrahydropyridine-2,6-dicarboxylate N-acetyltransferase from Lactobacillus helveticus (strain DPC 4571).